Consider the following 502-residue polypeptide: Probable cytosol aminopeptidase (502 aa).

2 residues coordinate Mn(2+): Lys265 and Asp270. The active site involves Lys277. Residues Asp288, Asp347, and Glu349 each contribute to the Mn(2+) site. Arg351 is an active-site residue.

The protein belongs to the peptidase M17 family. The cofactor is Mn(2+).

It is found in the cytoplasm. The catalysed reaction is Release of an N-terminal amino acid, Xaa-|-Yaa-, in which Xaa is preferably Leu, but may be other amino acids including Pro although not Arg or Lys, and Yaa may be Pro. Amino acid amides and methyl esters are also readily hydrolyzed, but rates on arylamides are exceedingly low.. It catalyses the reaction Release of an N-terminal amino acid, preferentially leucine, but not glutamic or aspartic acids.. Presumably involved in the processing and regular turnover of intracellular proteins. Catalyzes the removal of unsubstituted N-terminal amino acids from various peptides. This chain is Probable cytosol aminopeptidase, found in Rickettsia bellii (strain OSU 85-389).